Consider the following 287-residue polypeptide: POU domain class 2-associating factor 2 (287 aa).

One can recognise an OCA domain in the interval K10–R32. Disordered regions lie at residues D24–I51, T161–R199, and P247–G279. 2 stretches are compositionally biased toward polar residues: residues Q33–P49 and L180–R199.

Belongs to the POU2AF family. In terms of assembly, interacts with POU2F3 (via the POU domain) in a DNA-dependent manner; this interaction recruits POU2AF2 to chromatin and increases POU2F3 transactivation activity. As to expression, expressed in tuft cells of the small intestine, trachea, thymus, and colon.

Its subcellular location is the cytoplasm. The protein resides in the cytosol. It localises to the nucleus. Functionally, transcriptional coactivator of POU2F3. This complex drives the development of tuft cells, a rare chemosensory cells that coordinate immune and neural functions within mucosal epithelial tissues. The chain is POU domain class 2-associating factor 2 from Mus musculus (Mouse).